The primary structure comprises 232 residues: Lipoprotein-releasing system ATP-binding protein LolD (232 aa).

The ABC transporter domain occupies 11–232 (IEVTDLQRAF…LHDGRLIEEY (222 aa)). ATP is bound at residue 47 to 54 (GPSGAGKS).

The protein belongs to the ABC transporter superfamily. Lipoprotein translocase (TC 3.A.1.125) family. The complex is composed of two ATP-binding proteins (LolD) and two transmembrane proteins (LolC and LolE).

It is found in the cell inner membrane. In terms of biological role, part of the ABC transporter complex LolCDE involved in the translocation of mature outer membrane-directed lipoproteins, from the inner membrane to the periplasmic chaperone, LolA. Responsible for the formation of the LolA-lipoprotein complex in an ATP-dependent manner. In Zymomonas mobilis subsp. mobilis (strain ATCC 31821 / ZM4 / CP4), this protein is Lipoprotein-releasing system ATP-binding protein LolD.